The following is an 832-amino-acid chain: Sodium/hydrogen exchanger 3 (832 aa).

Residues 1 to 29 (MSGRGGCGPCWGLLLALVLALGALPWTQG) form the signal peptide. The Extracellular segment spans residues 30–50 (AEQEHHDEIQGFQIVTFKWHH). A helical transmembrane segment spans residues 51-73 (VQDPYIIALWVLVASLAKIVFHL). Residues 74–81 (SHKVTSVV) lie on the Cytoplasmic side of the membrane. Residues 82-101 (PESALLIVLGLVLGGIVLAA) form a helical membrane-spanning segment. The Extracellular portion of the chain corresponds to 102 to 110 (DHIASFTLT). Residues 111–128 (PTVFFFYLLPPIVLDAGY) form a helical membrane-spanning segment. Topologically, residues 129-131 (FMP) are cytoplasmic. A helical membrane pass occupies residues 132–167 (NRLFFSNLGSILLYAVVGTVWNAATTGLSLYGVFLS). Residues G140 and S141 each coordinate a 1,2-diacyl-sn-glycero-3-phospho-(1D-myo-inositol). Over 168-180 (GIMGELKIGLLDF) the chain is Extracellular. A helical transmembrane segment spans residues 181-202 (LLFGSLIAAVDPVAVLAVFEEV). The Cytoplasmic portion of the chain corresponds to 203-204 (HV). Residues 205 to 236 (NEVLFIIVFGESLLNDAVTVVLYNVFQSFVTL) form a helical membrane-spanning segment. At 237–243 (GGDKVTG) the chain is on the extracellular side. A helical membrane pass occupies residues 244 to 278 (VDCVKGIVSFFVVSLGGTLVGVVFAFLLSLVTRFT). At 279–280 (KH) the chain is on the cytoplasmic side. A helical transmembrane segment spans residues 281-303 (VRVIEPGFVFIISYLSYLTSEML). The Extracellular segment spans residues 304–305 (SL). A helical membrane pass occupies residues 306–322 (SSILAITFCGICCQKYV). Residues 323–329 (KANISEQ) are Cytoplasmic-facing. Residues 330–358 (SATTVRYTMKMLASGAETIIFMFLGISAV) form a helical membrane-spanning segment. The Extracellular portion of the chain corresponds to 359–366 (DPLIWTWN). The helical transmembrane segment at 367-388 (TAFVLLTLLFVSVFRAIGVVLQ) threads the bilayer. The Cytoplasmic portion of the chain corresponds to 389 to 401 (TWLLNRYRMVQLE). Residue M397 coordinates a 1,2-diacyl-sn-glycero-3-phospho-(1D-myo-inositol). A helical transmembrane segment spans residues 402 to 425 (LIDQVVMSYGGLRGAVAFALVALL). Residues 426 to 432 (DGNKVKE) lie on the Extracellular side of the membrane. The chain crosses the membrane as a helical span at residues 433–466 (KNLFVSTTIIVVFFTVIFQGLTIKPLVQWLKVKR). Residues 467–832 (SEHREPKLNE…GAEHPESTHM (366 aa)) lie on the Cytoplasmic side of the membrane. A 1,2-diacyl-sn-glycero-3-phospho-(1D-myo-inositol) is bound by residues Q496, I497, and H499. A phosphoserine mark is found at S554 and S562. Positions 575 to 589 (RPSTVEASVSYLLRE) are interaction with EZR. The segment at 590–667 (SASAVCLDMQ…RKRLESFKSA (78 aa)) is interaction with NHERF4. The interaction with AHCYL1 stretch occupies residues 591–696 (ASAVCLDMQS…AQKRRNSSVP (106 aa)). Phosphoserine is present on residues S592 and S607. S663 carries the phosphoserine; by SGK1 modification. The segment at 664–706 (FKSAKLGLGQSKKATKHKRERERAQKRRNSSVPNGKLPLDSPA) is disordered. A compositionally biased stretch (basic residues) spans 676–692 (KATKHKRERERAQKRRN). 3 positions are modified to phosphoserine: S719, S813, and S816.

This sequence belongs to the monovalent cation:proton antiporter 1 (CPA1) transporter (TC 2.A.36) family. As to quaternary structure, homodimer. Found in the forms of complex and dynamic macromolecular complexes. Interacts with CHP1; this interaction increases trafficking and activity at the plasma membrane of SLC9A3. Interacts with CHP2 and SHANK2. Interacts with NHERF4 and interaction decreases in response to elevated calcium ion levels. Binds NHERF1 and NHERF2. Interacts with PDZK1 (via C-terminal PDZ domain). Interacts with AHCYL1; interaction is required for SLC9A3 activity. Interacts with EZR; interaction targets SLC9A3 to the apical membrane. Interacts with SNX27 (via PDZ domains); directs SLC9A3 membrane insertion from early endosomes to the plasma membrane. Phosphorylated by PKA, which inhibits activity. Phosphorylation at Ser-663 by SGK1 is associated with increased abundance at the cell membrane and activity. Phosphorylation at Ser-719 by CSNK2A1 regulates SLC9A3 activity through the formation of multiple signaling complexes. In terms of tissue distribution, intestinal and kidney specific. Most abundant in kidney cortex, followed equally by ileum and ascending colon, then kidney medulla and jejunum. Is absent from duodenum and descending colon.

Its subcellular location is the apical cell membrane. It is found in the cell membrane. It localises to the recycling endosome membrane. The protein localises to the early endosome membrane. The enzyme catalyses Na(+)(in) + H(+)(out) = Na(+)(out) + H(+)(in). With respect to regulation, seems to switch between active and inactive modes in response to various stimuli. Activated directly or indirectly by membrane phosphatidylinositol (PIs). Regulated by a variety of auxiliary proteins, which facilitate the maturation, cell surface expression and function of the transporter. Inhibited specifically by the drug tenapanor. Its function is as follows. Plasma membrane Na(+)/H(+) antiporter. Exchanges intracellular H(+) ions for extracellular Na(+) in 1:1 stoichiometry, playing a key role in salt and fluid absorption and pH homeostasis. Major apical Na(+)/H(+) exchanger in kidney and intestine playing an important role in renal and intestine Na(+) absorption and blood pressure regulation. The protein is Sodium/hydrogen exchanger 3 (SLC9A3) of Oryctolagus cuniculus (Rabbit).